The following is a 1228-amino-acid chain: P3N-PIPO polyprotein (1228 aa).

A Peptidase S30 domain is found at 408–547; the sequence is IVGNSKINYI…RSVYAKMDQY (140 aa). Residues histidine 456, aspartate 465, and serine 499 each act as for P1 proteinase activity in the active site. The Involved in interaction with stylet and aphid transmission signature appears at 598–601; it reads KITC. The short motif at 856–858 is the Involved in virions binding and aphid transmission element; that stretch reads PTK. One can recognise a Peptidase C6 domain in the interval 882–1004; that stretch reads MYIAKKGYCY…DSEMKHYIVG (123 aa). Catalysis depends on for helper component proteinase activity residues cysteine 890 and histidine 963.

The protein belongs to the potyviridae P3N-PIPO polyprotein family. In terms of assembly, interacts (via PIPO domain) with host PCaP1 protein; this interaction may help to anchor the movement complex to the plasma membrane from which the complex could move to the plasmodesmata. In terms of processing, potyviral RNA is expressed as two polyproteins which undergo post-translational proteolytic processing. Genome polyprotein is processed by NIa-pro, P1 and HC-pro proteinases resulting in the production of at least ten individual proteins. P3N-PIPO is cleaved by P1 and HC-pro proteinases resulting in the production of three individual proteins. The P1 proteinase and the HC-pro cleave only their respective C-termini autocatalytically.

It is found in the host cell junction. The protein resides in the host plasmodesma. It catalyses the reaction Hydrolyzes a Gly-|-Gly bond at its own C-terminus, commonly in the sequence -Tyr-Xaa-Val-Gly-|-Gly, in the processing of the potyviral polyprotein.. Its function is as follows. Required for aphid transmission and also has proteolytic activity. Only cleaves a Gly-Gly dipeptide at its own C-terminus. Interacts with virions and aphid stylets. Acts as a suppressor of RNA-mediated gene silencing, also known as post-transcriptional gene silencing (PTGS), a mechanism of plant viral defense that limits the accumulation of viral RNAs. May have RNA-binding activity. Allows efficient cell to cell propagation, by bypassing the host cell wall barrier. Transports viral genome to neighboring plant cells directly through plasmosdesmata, without any budding. This chain is P3N-PIPO polyprotein, found in Carica papaya (Papaya).